The primary structure comprises 774 residues: Glycophorin-binding protein 130 (774 aa).

The short motif at 84–88 (RILAE) is the PEXEL motif element. 10 disordered regions span residues 97 to 243 (EKTT…AADP), 256 to 291 (LTNT…EYAS), 310 to 334 (DPND…PEGQ), 358 to 383 (NTDP…DPEG), 410 to 434 (DPND…PEGQ), 458 to 481 (NTDP…SDPE), 509 to 533 (DPND…PEGQ), 609 to 632 (DPND…DPEG), 661 to 682 (NDEV…DPEG), and 709 to 734 (DPND…EGQI). 2 stretches are compositionally biased toward basic and acidic residues: residues 117 to 140 (TKKD…SEKQ) and 174 to 198 (KKEE…EPKA). Residues 201–228 (VSQKPSTSTRSNNEVKIRAASNQETLTS) are compositionally biased toward polar residues. GBP repeat units lie at residues 226–275 (LTSA…NKED), 276–325 (LTSA…NKED), 326–375 (LTSA…NKED), 376–425 (LTSA…NKED), 426–474 (LTSA…DNKE), 475–524 (LTSS…NKED), 525–574 (LTSA…NKEE), 575–624 (LTSS…NKED), 625–674 (LTSA…NKED), 675–724 (LTSA…NKED), and 725–774 (LTSA…NNEA). 9 stretches are compositionally biased toward basic and acidic residues: residues 264–276 (EVER…KEDL), 314–326 (DVER…KEDL), 364–376 (EVER…KEDL), 414–426 (EVER…KEDL), 464–476 (EVER…KELT), 513–525 (EVER…KEDL), 613–625 (EVER…KEDL), 663–675 (EVER…KEDL), and 713–725 (DVER…KEDL).

In terms of assembly, interacts with host glycophorin.

The protein localises to the secreted. The protein resides in the cell surface. It localises to the host cytoplasm. In terms of biological role, involved in merozoite invasion of host erythrocytes. This Plasmodium falciparum (isolate FCR-3 / Gambia) protein is Glycophorin-binding protein 130.